A 1155-amino-acid chain; its full sequence is DNA-directed RNA polymerase subunit beta (1155 aa).

Belongs to the RNA polymerase beta chain family. The RNAP catalytic core consists of 2 alpha, 1 beta, 1 beta' and 1 omega subunit. When a sigma factor is associated with the core the holoenzyme is formed, which can initiate transcription.

It carries out the reaction RNA(n) + a ribonucleoside 5'-triphosphate = RNA(n+1) + diphosphate. Functionally, DNA-dependent RNA polymerase catalyzes the transcription of DNA into RNA using the four ribonucleoside triphosphates as substrates. In Borrelia hermsii (strain HS1 / DAH), this protein is DNA-directed RNA polymerase subunit beta.